The sequence spans 459 residues: Phosphomethylpyrimidine synthase (459 aa).

Substrate contacts are provided by residues asparagine 80, methionine 109, tyrosine 139, histidine 175, 195 to 197 (SRG), 236 to 239 (DSLR), and glutamate 275. Zn(2+) is bound at residue histidine 279. Tyrosine 302 serves as a coordination point for substrate. Histidine 343 is a Zn(2+) binding site. Residues cysteine 423, cysteine 426, and cysteine 431 each coordinate [4Fe-4S] cluster.

Belongs to the ThiC family. [4Fe-4S] cluster is required as a cofactor.

It catalyses the reaction 5-amino-1-(5-phospho-beta-D-ribosyl)imidazole + S-adenosyl-L-methionine = 4-amino-2-methyl-5-(phosphooxymethyl)pyrimidine + CO + 5'-deoxyadenosine + formate + L-methionine + 3 H(+). It functions in the pathway cofactor biosynthesis; thiamine diphosphate biosynthesis. Functionally, catalyzes the synthesis of the hydroxymethylpyrimidine phosphate (HMP-P) moiety of thiamine from aminoimidazole ribotide (AIR) in a radical S-adenosyl-L-methionine (SAM)-dependent reaction. This chain is Phosphomethylpyrimidine synthase, found in Gloeothece citriformis (strain PCC 7424) (Cyanothece sp. (strain PCC 7424)).